A 217-amino-acid chain; its full sequence is Peroxiredoxin (217 aa).

One can recognise a Thioredoxin domain in the interval Val2 to Thr159. The active-site Cysteine sulfenic acid (-SOH) intermediate is Cys46. Arg122 lines the substrate pocket.

The protein belongs to the peroxiredoxin family. Prx6 subfamily. In terms of assembly, homodecamer. Pentamer of dimers that assemble into a ring structure.

It localises to the cytoplasm. It carries out the reaction a hydroperoxide + [thioredoxin]-dithiol = an alcohol + [thioredoxin]-disulfide + H2O. Thiol-specific peroxidase that catalyzes the reduction of hydrogen peroxide and organic hydroperoxides to water and alcohols, respectively. Plays a role in cell protection against oxidative stress by detoxifying peroxides. The polypeptide is Peroxiredoxin (Methanococcus maripaludis (strain C5 / ATCC BAA-1333)).